A 65-amino-acid chain; its full sequence is Small ribosomal subunit protein bS21 (65 aa).

The tract at residues 45 to 65 (GRLKRSRSRRRAQRANEERNS) is disordered. The span at 48 to 57 (KRSRSRRRAQ) shows a compositional bias: basic residues.

The protein belongs to the bacterial ribosomal protein bS21 family.

The polypeptide is Small ribosomal subunit protein bS21 (Chlorobium phaeobacteroides (strain DSM 266 / SMG 266 / 2430)).